Reading from the N-terminus, the 658-residue chain is Putative endo-beta-N-acetylglucosaminidase (658 aa).

The first 23 residues, 1 to 23 (MKKVRFIFLALLFFLASPEGAMA), serve as a signal peptide directing secretion. Cell wall-binding repeat units follow at residues 42 to 63 (ANEW…DANY), 65 to 84 (ENEW…GGYM), 86 to 105 (KSEW…DGKM), 124 to 145 (IEDW…DGQH), 147 to 166 (EKEW…GGYL), 185 to 206 (QQGW…NGNY), 208 to 227 (DKEW…GGYM), 229 to 248 (ANEW…DGKM), 250 to 271 (EKEW…GGYM), 273 to 292 (ANEW…DGKI), 294 to 315 (EKEW…GGYM), 317 to 336 (ANEW…DGKI), and 338 to 359 (EKEW…GGYM).

It belongs to the glycosyl hydrolase 73 family.

Its subcellular location is the secreted. It catalyses the reaction an N(4)-(oligosaccharide-(1-&gt;3)-[oligosaccharide-(1-&gt;6)]-beta-D-Man-(1-&gt;4)-beta-D-GlcNAc-(1-&gt;4)-alpha-D-GlcNAc)-L-asparaginyl-[protein] + H2O = an oligosaccharide-(1-&gt;3)-[oligosaccharide-(1-&gt;6)]-beta-D-Man-(1-&gt;4)-D-GlcNAc + N(4)-(N-acetyl-beta-D-glucosaminyl)-L-asparaginyl-[protein]. In terms of biological role, plays an important role in cell wall degradation and cell separation. The protein is Putative endo-beta-N-acetylglucosaminidase (lytB) of Streptococcus pneumoniae serotype 4 (strain ATCC BAA-334 / TIGR4).